A 633-amino-acid polypeptide reads, in one-letter code: Keratin, type II cytoskeletal 2 epidermal (633 aa).

A head region spans residues 1 to 189; the sequence is MSCQISCKSR…DPEIQNVKSQ (189 aa). Arginine 18 bears the Asymmetric dimethylarginine mark. Residues serine 21, serine 24, and serine 60 each carry the phosphoserine modification. Residues 190–225 are coil 1A; that stretch reads EREQIKTLNNKFASFIDKVRFLEQQNQVLQTKWELL. The IF rod domain occupies 190 to 503; it reads EREQIKTLNN…KLLEGEECRM (314 aa). The tract at residues 226-244 is linker 1; it reads QQLDVSTRTTNLEPIFQAY. A coil 1B region spans residues 245 to 336; sequence IAKLKKYVDT…FLFDXELSQM (92 aa). The linker 12 stretch occupies residues 337-360; the sequence is QTQISETNVTLSMDNNRSLDLDSI. The tract at residues 361-499 is coil 2; the sequence is ISEVKAQYEE…ATYRKLLEGE (139 aa). The segment at 500–633 is tail; the sequence is ECRMSGDLSS…SGSSVTFSFR (134 aa). A compositionally biased stretch (low complexity) spans 518 to 527; the sequence is SSMSSSMTSR. The tract at residues 518 to 633 is disordered; the sequence is SSMSSSMTSR…SGSSVTFSFR (116 aa). A compositionally biased stretch (gly residues) spans 528-613; sequence GGFGGYGSGG…GYGSGGGSRG (86 aa). Omega-N-methylarginine occurs at positions 588 and 612.

The protein belongs to the intermediate filament family. In terms of assembly, heterotetramer of two type I and two type II keratins. Associates with KRT10.

It localises to the cytoplasm. Functionally, probably contributes to terminal cornification. Associated with keratinocyte activation, proliferation and keratinization. Required for maintenance of corneocytes and keratin filaments in suprabasal keratinocytes in the epidermis of the ear, potentially via moderation of expression and localization of keratins and their partner proteins. Plays a role in the establishment of the epidermal barrier on plantar skin. The sequence is that of Keratin, type II cytoskeletal 2 epidermal (KRT2) from Canis lupus familiaris (Dog).